Consider the following 536-residue polypeptide: Serine protease inhibitor 28Dc (536 aa).

The first 16 residues, 1–16, serve as a signal peptide directing secretion; the sequence is MWRLLLALLLVSSVCC. Residue N355 is glycosylated (N-linked (GlcNAc...) asparagine).

The protein belongs to the serpin family.

Its subcellular location is the secreted. Serine protease inhibitor which is required for pupal viability and plays an essential role in regulating the melanization reaction. Inhibits spontaneous melanization and appears to be involved in the melanization immune response to physical wounding in larvae and adults. Acts by negatively regulating the Hayan-phenoloxidase (PPO1) cascade in the hemolymph and possibly the trachea. May function by controlling the initial release of the activated form of PPO1, phenoloxidase (PO) and thus maintains PO availability for processes such as wound response and pigmentation. In Drosophila melanogaster (Fruit fly), this protein is Serine protease inhibitor 28Dc.